The primary structure comprises 110 residues: UPF0060 membrane protein PBPRB0495 (110 aa).

4 consecutive transmembrane segments (helical) span residues 7–27, 33–53, 63–83, and 85–105; these read VGLF…PYLW, TIWL…LLTL, AAYG…VDGI, and PTVW…IIMF.

Belongs to the UPF0060 family.

It localises to the cell inner membrane. The sequence is that of UPF0060 membrane protein PBPRB0495 from Photobacterium profundum (strain SS9).